Consider the following 129-residue polypeptide: GEL complex subunit OPTI (129 aa).

At 1-44 (MSGGRRKEEPPQPQLANGALKVSVWSKVLRSDAAWDDKDEFLDV) the chain is on the cytoplasmic side. Residues 45 to 65 (IYWFRQIIALVLGVIWGVLPL) form a helical membrane-spanning segment. A topological domain (lumenal) is located at residue arginine 66. Residues 67–84 (GFLGIAGFCLINAGVLYL) traverse the membrane as a helical segment. The Cytoplasmic segment spans residues 85–103 (YFSNYLQIDEEEYGGTWEL). The helical transmembrane segment at 104–127 (TKEGFMTSFALFMVIWIIFYTAIH) threads the bilayer. The Lumenal portion of the chain corresponds to 128–129 (YD).

Belongs to the EMC6 family. In terms of assembly, component of the GET- and EMC-like (GEL) complex, composed of RAB5IF/OPTI and TMCO1. The GEL complex is part of the multi-pass translocon (MPT) complex, composed of three subcomplexes, the GEL complex (composed of RAB5IF/OPTI and TMCO1), the BOS complex (composed of NCLN/Nicalin, NOMO1 and TMEM147) and the PAT complex (composed of WDR83OS/Asterix and CCDC47). The MPT complex associates with the SEC61 complex. Interacts with NDUFS3, NDUFA4, NDUFV1, NDUFA9 and NDUFS8 of the mitochondrial membrane respiratory chain NADH dehydrogenase (Complex I). Interacts with UQCRC2 of the ubiquinol-cytochrome c reductase complex (Complex III). Interacts with COX5A and COX7C of the cytochrome c oxidase complex (Complex IV). Expressed in neuronal cells.

It is found in the endoplasmic reticulum membrane. The protein localises to the mitochondrion inner membrane. In terms of biological role, component of the multi-pass translocon (MPT) complex that mediates insertion of multi-pass membrane proteins into the lipid bilayer of membranes. The MPT complex takes over after the SEC61 complex: following membrane insertion of the first few transmembrane segments of proteins by the SEC61 complex, the MPT complex occludes the lateral gate of the SEC61 complex to promote insertion of subsequent transmembrane regions. Within the MPT complex, the GEL subcomplex may mediate insertion of transmembrane regions into the membrane. In addition to its role in multi-pass membrane insertion, RAB5IF/OPTI also acts as an assembly factor for mitochondrial respiratory complexes. The sequence is that of GEL complex subunit OPTI from Mus musculus (Mouse).